Reading from the N-terminus, the 495-residue chain is MGLSRKEQVFLALLGASGVSGLTALILLLVEATSVLLPTDIKFGIVFDAGSSHTSLFLYQWLANKENGTGVVSQALACQVEGPGISSYTSNAAQAGESLQGCLEEALVLIPEAQHRKTPTFLGATAGMRLLSRKNSSQARDIFAAVTQVLGRSPVDFWGAELLAGQAEGAFGWITVNYGLGTLVKYSFTGEWIQPPEEMLVGALDMGGASTQITFVPGGPILDKSTQADFRLYGSDYSVYTHSYLCFGRDQMLSRLLVGLVQSRPAALLRHPCYLSGYQTTLALGPLYESPCVHATPPLSLPQNLTVEGTGNPGACVSAIRELFNFSSCQGQEDCAFDGVYQPPLRGQFYAFSNFYYTFHFLNLTSRQPLSTVNATIWEFCQRPWKLVEASYPGQDRWLRDYCASGLYILTLLHEGYGFSEETWPSLEFRKQAGGVDIGWTLGYMLNLTGMIPADAPAQWRAESYGVWVAKVVFMVLALVAVVGAALVQLFWLQD.

Over 1–8 (MGLSRKEQ) the chain is Cytoplasmic. The helical transmembrane segment at 9–29 (VFLALLGASGVSGLTALILLL) threads the bilayer. Residues 30–471 (VEATSVLLPT…AESYGVWVAK (442 aa)) lie on the Extracellular side of the membrane. N-linked (GlcNAc...) asparagine glycosylation is present at Asn67. An intrachain disulfide couples Cys78 to Cys102. The active-site Proton acceptor is Glu168. Cys246 and Cys292 are joined by a disulfide. The N-linked (GlcNAc...) asparagine glycan is linked to Asn304. Cys329 and Cys335 are disulfide-bonded. Asn363 carries N-linked (GlcNAc...) asparagine glycosylation. An intrachain disulfide couples Cys381 to Cys403. A helical transmembrane segment spans residues 472–492 (VVFMVLALVAVVGAALVQLFW). Residues 493–495 (LQD) are Cytoplasmic-facing.

The protein belongs to the GDA1/CD39 NTPase family. Ca(2+) is required as a cofactor. Requires Mg(2+) as cofactor. Post-translationally, N-glycosylated.

The protein localises to the cell membrane. The catalysed reaction is a ribonucleoside 5'-triphosphate + 2 H2O = a ribonucleoside 5'-phosphate + 2 phosphate + 2 H(+). With respect to regulation, not inhibited by ARL 67156. Its function is as follows. Canalicular ectonucleoside NTPDase responsible for the main hepatic NTPDase activity. Ectonucleoside NTPDases catalyze the hydrolysis of gamma- and beta-phosphate residues of nucleotides, playing a central role in concentration of extracellular nucleotides. Has activity toward ATP, ADP, UTP and UDP, but not toward AMP. The polypeptide is Ectonucleoside triphosphate diphosphohydrolase 8 (ENTPD8) (Homo sapiens (Human)).